Consider the following 255-residue polypeptide: F-box/SPRY domain-containing protein 1 (255 aa).

The F-box domain maps to 3–51 (DPVAALCNYNVLEVIFSYLELEDLSHCSQVCKSWYHFLNDENSDVWRWH). The region spanning 61–253 (LKSDLLSSVS…VSMVYLGTPL (193 aa)) is the B30.2/SPRY domain.

It belongs to the FBXO45/Fsn family. Component of an E3 ubiquitin ligase complex composed of hiw and Fsn.

It is found in the synapse. It participates in protein modification; protein ubiquitination. In terms of biological role, required in the presynaptic motoneuron to down-regulate the levels of wnd and restrain synaptic terminal growth at the neuromuscular junction (NMJ). The polypeptide is F-box/SPRY domain-containing protein 1 (Drosophila erecta (Fruit fly)).